The chain runs to 189 residues: Hypoxanthine/guanine phosphoribosyltransferase (189 aa).

The protein belongs to the purine/pyrimidine phosphoribosyltransferase family. Archaeal HPRT subfamily. As to quaternary structure, homodimer.

The protein localises to the cytoplasm. It carries out the reaction IMP + diphosphate = hypoxanthine + 5-phospho-alpha-D-ribose 1-diphosphate. The catalysed reaction is GMP + diphosphate = guanine + 5-phospho-alpha-D-ribose 1-diphosphate. The protein operates within purine metabolism; IMP biosynthesis via salvage pathway; IMP from hypoxanthine: step 1/1. Catalyzes a salvage reaction resulting in the formation of IMP that is energically less costly than de novo synthesis. This Methanosarcina mazei (strain ATCC BAA-159 / DSM 3647 / Goe1 / Go1 / JCM 11833 / OCM 88) (Methanosarcina frisia) protein is Hypoxanthine/guanine phosphoribosyltransferase.